The primary structure comprises 432 residues: Adenylosuccinate synthetase (432 aa).

GTP contacts are provided by residues 13 to 19 and 41 to 43; these read GDEGKGK and GHT. The active-site Proton acceptor is Asp14. Asp14 and Gly41 together coordinate Mg(2+). Residues 14 to 17, 39 to 42, Thr130, Arg144, Gln225, Thr240, and Arg304 contribute to the IMP site; these read DEGK and NAGH. His42 (proton donor) is an active-site residue. 300-306 contacts substrate; the sequence is ATTGRRR. Residues Arg306, 332-334, and 415-417 contribute to the GTP site; these read KLD and STG.

Belongs to the adenylosuccinate synthetase family. In terms of assembly, homodimer. Mg(2+) serves as cofactor.

It localises to the cytoplasm. It carries out the reaction IMP + L-aspartate + GTP = N(6)-(1,2-dicarboxyethyl)-AMP + GDP + phosphate + 2 H(+). The protein operates within purine metabolism; AMP biosynthesis via de novo pathway; AMP from IMP: step 1/2. In terms of biological role, plays an important role in the de novo pathway of purine nucleotide biosynthesis. Catalyzes the first committed step in the biosynthesis of AMP from IMP. In Salmonella agona (strain SL483), this protein is Adenylosuccinate synthetase.